The following is a 591-amino-acid chain: Parathyroid hormone/parathyroid hormone-related peptide receptor (591 aa).

An N-terminal signal peptide occupies residues 1–26; the sequence is MGAARIAPSLALLLCCPVLSSAYALV. Topologically, residues 27-188 are extracellular; it reads DADDVFTKEE…REREVFDRLG (162 aa). 3 cysteine pairs are disulfide-bonded: cysteine 48–cysteine 117, cysteine 108–cysteine 148, and cysteine 131–cysteine 170. Positions 67 to 104 are disordered; the sequence is KGWTPASTSGKPRKEKASGKFYPESKENKDVPTGSRRR. Residues 81 to 96 show a composition bias toward basic and acidic residues; the sequence is EKASGKFYPESKENKD. N-linked (GlcNAc...) asparagine glycosylation is found at asparagine 151, asparagine 161, asparagine 166, and asparagine 176. Residues 189–212 traverse the membrane as a helical segment; that stretch reads MIYTVGYSMSLASLTVAVLILAYF. The Cytoplasmic segment spans residues 213-219; it reads RRLHCTR. The helical transmembrane segment at 220-239 threads the bilayer; it reads NYIHMHMFLSFMLRAASIFV. The Extracellular portion of the chain corresponds to 240–282; sequence KDAVLYSGFTLDEAERLTEEELHIIAQVPPPPAAAAVGYAGCR. The chain crosses the membrane as a helical span at residues 283–306; that stretch reads VAVTFFLYFLATNYYWILVEGLYL. The Cytoplasmic portion of the chain corresponds to 307-320; it reads HSLIFMAFFSEKKY. Residues 321–342 traverse the membrane as a helical segment; the sequence is LWGFTIFGWGLPAVFVAVWVGV. The Extracellular segment spans residues 343–361; sequence RATLANTGCWDLSSGHKKW. The helical transmembrane segment at 362–382 threads the bilayer; it reads IIQVPILASVVLNFILFINII. Over 383–409 the chain is Cytoplasmic; the sequence is RVLATKLRETNAGRCDTRQQYRKLLRS. Residues 410-428 form a helical membrane-spanning segment; that stretch reads TLVLVPLFGVHYTVFMALP. Residues 429–440 are Extracellular-facing; sequence YTEVSGTLWQIQ. A helical transmembrane segment spans residues 441–463; the sequence is MHYEMLFNSFQGFFVAIIYCFCN. The Cytoplasmic segment spans residues 464-591; that stretch reads GEVQAEIRKS…LLQEEWETVM (128 aa). Positions 474–477 match the Important for interaction with G proteins motif; the sequence is WSRW. Residues 516-544 are disordered; sequence LPLSPRLPPATTNGHSQLPGHAKPGAPAT.

It belongs to the G-protein coupled receptor 2 family. Homodimer in the absence of bound ligand. Peptide hormone binding leads to dissociation of the homodimer. Post-translationally, N-glycosylated.

It is found in the cell membrane. Functionally, G-protein-coupled receptor for parathyroid hormone (PTH) and for parathyroid hormone-related peptide (PTHLH). Ligand binding causes a conformation change that triggers signaling via guanine nucleotide-binding proteins (G proteins) and modulates the activity of downstream effectors, such as adenylate cyclase (cAMP). PTH1R is coupled to G(s) G alpha proteins and mediates activation of adenylate cyclase activity. PTHLH dissociates from PTH1R more rapidly than PTH; as consequence, the cAMP response induced by PTHLH decays faster than the response induced by PTH. The chain is Parathyroid hormone/parathyroid hormone-related peptide receptor (Pth1r) from Rattus norvegicus (Rat).